The sequence spans 176 residues: Ribosome maturation factor RimM (176 aa).

The PRC barrel domain occupies Glu-101–Leu-170.

This sequence belongs to the RimM family. As to quaternary structure, binds ribosomal protein uS19.

The protein localises to the cytoplasm. In terms of biological role, an accessory protein needed during the final step in the assembly of 30S ribosomal subunit, possibly for assembly of the head region. Essential for efficient processing of 16S rRNA. May be needed both before and after RbfA during the maturation of 16S rRNA. It has affinity for free ribosomal 30S subunits but not for 70S ribosomes. This Solibacter usitatus (strain Ellin6076) protein is Ribosome maturation factor RimM.